Reading from the N-terminus, the 95-residue chain is Small ribosomal subunit protein bS6 (95 aa).

Belongs to the bacterial ribosomal protein bS6 family.

Its function is as follows. Binds together with bS18 to 16S ribosomal RNA. The sequence is that of Small ribosomal subunit protein bS6 from Clostridium perfringens (strain ATCC 13124 / DSM 756 / JCM 1290 / NCIMB 6125 / NCTC 8237 / Type A).